We begin with the raw amino-acid sequence, 250 residues long: Glycerol-1-phosphate phosphohydrolase 2 (250 aa).

The active-site Nucleophile is aspartate 18. Mg(2+)-binding residues include aspartate 18 and aspartate 20. The Proton donor role is filled by aspartate 20. A Glycyl lysine isopeptide (Lys-Gly) (interchain with G-Cter in ubiquitin) cross-link involves residue lysine 64. Serine 90 is modified (phosphoserine). Residue lysine 144 forms a Glycyl lysine isopeptide (Lys-Gly) (interchain with G-Cter in ubiquitin) linkage. Aspartate 179 serves as a coordination point for Mg(2+).

The protein belongs to the HAD-like hydrolase superfamily. DOG/GPP family. Monomer. The cofactor is Mg(2+).

It is found in the cytoplasm. The protein resides in the nucleus. It catalyses the reaction sn-glycerol 1-phosphate + H2O = glycerol + phosphate. The catalysed reaction is sn-glycerol 3-phosphate + H2O = glycerol + phosphate. Functionally, glycerol-1-phosphate phosphohydrolase involved in glycerol biosynthesis. Plays a role in osmoadaptation. This Saccharomyces cerevisiae (strain ATCC 204508 / S288c) (Baker's yeast) protein is Glycerol-1-phosphate phosphohydrolase 2.